The primary structure comprises 213 residues: Ras-related protein Rab-25 (213 aa).

GTP contacts are provided by Ser-21, Gly-24, Lys-25, Thr-26, Asn-27, Ser-38, His-39, Thr-43, and Thr-44. Thr-26 is a Mg(2+) binding site. Short sequence motifs (switch) lie at residues 35-49 (NEFSHDSRTTIGVEF) and 67-84 (DTAGLERYRAITSAYYRG). Residues Thr-44 and Asp-67 each coordinate Mg(2+). GTP-binding residues include Gly-70, Asn-125, Lys-126, Asp-128, Ala-156, and Leu-157. 2 S-geranylgeranyl cysteine lipidation sites follow: Cys-209 and Cys-210. Cys-210 carries the cysteine methyl ester modification. The propeptide at 211-213 (ISL) is removed in mature form.

Belongs to the small GTPase superfamily. Rab family. Interacts (GTP-bound form) with RAB11FIP1, RAB11FIP2, RAB11FIP3 and RAB11FIP4. Interacts (via the hypervariable C-terminal region) with ITGB1 (via the cytoplasmic region); the interaction is GTP-dependent. Interacts with ITGAV. Associates with the integrin alpha-V/beta-1 heterodimer. Interacts with VPS33B. It depends on Mg(2+) as a cofactor.

It localises to the cell membrane. It is found in the cell projection. Its subcellular location is the pseudopodium membrane. The protein localises to the cytoplasmic vesicle. It catalyses the reaction GTP + H2O = GDP + phosphate + H(+). Its activity is regulated as follows. Regulated by guanine nucleotide exchange factors (GEFs) which promote the exchange of bound GDP for free GTP. Regulated by GTPase activating proteins (GAPs) which increase the GTP hydrolysis activity. Inhibited by GDP dissociation inhibitors (GDIs) which prevent Rab-GDP dissociation. The small GTPases Rab are key regulators of intracellular membrane trafficking, from the formation of transport vesicles to their fusion with membranes. Rabs cycle between an inactive GDP-bound form and an active GTP-bound form that is able to recruit to membranes different set of downstream effectors directly responsible for vesicle formation, movement, tethering and fusion. RAB25 regulates epithelial cell differentiation, proliferation and survival, thereby playing key roles in tumorigenesis. Promotes invasive migration of cells in which it functions to localize and maintain integrin alpha-V/beta-1 at the tips of extending pseudopodia. Involved in the regulation of epithelial morphogenesis through the control of CLDN4 expression and localization at tight junctions. May selectively regulate the apical recycling pathway. Together with MYO5B regulates transcytosis. The protein is Ras-related protein Rab-25 (RAB25) of Bos taurus (Bovine).